Reading from the N-terminus, the 144-residue chain is MKGLVILVSLMCLALYNRICAYQVRGMRSDVLCGDIRFTVQCICNELGYFPTERLDKPCPWPNREKRSAPEDELAFEDYEDQDYFHPRALSIPSEIEHDNEKESDAFSILSRGKREIAFYQECCNIRTEHKCNRTTVSLYCRTY.

The signal sequence occupies residues 1–21 (MKGLVILVSLMCLALYNRICA). Disulfide bonds link cysteine 33–cysteine 123, cysteine 42–cysteine 59, cysteine 44–cysteine 141, and cysteine 124–cysteine 132. The propeptide at 68-113 (SAPEDELAFEDYEDQDYFHPRALSIPSEIEHDNEKESDAFSILSRG) is c peptide. N-linked (GlcNAc...) (complex) asparagine glycosylation is present at asparagine 133.

In terms of tissue distribution, androgenic gland.

It localises to the secreted. Its function is as follows. Controls sex differentiation and the formation of male appendages, spermatogenesis, pigmentation, and male specific behavior. The polypeptide is Androgenic gland hormone (Armadillidium vulgare (Pillbug)).